The following is a 116-amino-acid chain: Large ribosomal subunit protein uL18 (116 aa).

It belongs to the universal ribosomal protein uL18 family. As to quaternary structure, part of the 50S ribosomal subunit; part of the 5S rRNA/L5/L18/L25 subcomplex. Contacts the 5S and 23S rRNAs.

This is one of the proteins that bind and probably mediate the attachment of the 5S RNA into the large ribosomal subunit, where it forms part of the central protuberance. The sequence is that of Large ribosomal subunit protein uL18 from Pseudomonas entomophila (strain L48).